The following is a 242-amino-acid chain: DNA repair protein RecO (242 aa).

Belongs to the RecO family. Monomer.

Functionally, involved in DNA repair and RecF pathway recombination. The protein is DNA repair protein RecO of Shigella flexneri serotype 5b (strain 8401).